A 395-amino-acid polypeptide reads, in one-letter code: Pyruvate synthase subunit PorA (395 aa).

In terms of assembly, heterotetramer of one alpha, one beta, one delta and one gamma chain.

It catalyses the reaction 2 oxidized [2Fe-2S]-[ferredoxin] + pyruvate + CoA = 2 reduced [2Fe-2S]-[ferredoxin] + acetyl-CoA + CO2 + H(+). This chain is Pyruvate synthase subunit PorA (porA), found in Pyrococcus horikoshii (strain ATCC 700860 / DSM 12428 / JCM 9974 / NBRC 100139 / OT-3).